The primary structure comprises 329 residues: tRNA N6-adenosine threonylcarbamoyltransferase (329 aa).

Fe cation contacts are provided by histidine 107 and histidine 111. Substrate-binding positions include 129 to 133, aspartate 162, glycine 175, and asparagine 268; that span reads LVSGG. Fe cation is bound at residue aspartate 296.

The protein belongs to the KAE1 / TsaD family. Fe(2+) serves as cofactor.

It is found in the cytoplasm. The catalysed reaction is L-threonylcarbamoyladenylate + adenosine(37) in tRNA = N(6)-L-threonylcarbamoyladenosine(37) in tRNA + AMP + H(+). In terms of biological role, required for the formation of a threonylcarbamoyl group on adenosine at position 37 (t(6)A37) in tRNAs that read codons beginning with adenine. Is involved in the transfer of the threonylcarbamoyl moiety of threonylcarbamoyl-AMP (TC-AMP) to the N6 group of A37, together with TsaE and TsaB. TsaD likely plays a direct catalytic role in this reaction. This chain is tRNA N6-adenosine threonylcarbamoyltransferase, found in Nitratiruptor sp. (strain SB155-2).